A 232-amino-acid chain; its full sequence is Ribonuclease 3 (232 aa).

The RNase III domain maps to 5-134 (QTVLKNHFAI…FLGALLLDKD (130 aa)). E47 is a Mg(2+) binding site. The active site involves D51. Residues D120 and E123 each contribute to the Mg(2+) site. Residue E123 is part of the active site. The DRBM domain occupies 160-229 (DYKTHLQELL…AKNAVEKGLD (70 aa)).

This sequence belongs to the ribonuclease III family. As to quaternary structure, homodimer. It depends on Mg(2+) as a cofactor.

It localises to the cytoplasm. The enzyme catalyses Endonucleolytic cleavage to 5'-phosphomonoester.. In terms of biological role, digests double-stranded RNA. Involved in the processing of primary rRNA transcript to yield the immediate precursors to the large and small rRNAs (23S and 16S). Processes some mRNAs, and tRNAs when they are encoded in the rRNA operon. Processes pre-crRNA and tracrRNA of type II CRISPR loci if present in the organism. The polypeptide is Ribonuclease 3 (Streptococcus pneumoniae serotype 4 (strain ATCC BAA-334 / TIGR4)).